A 320-amino-acid chain; its full sequence is UDP-3-O-acyl-N-acetylglucosamine deacetylase (320 aa).

Zn(2+)-binding residues include His92, His251, and Asp255. The Proton donor role is filled by His278.

The protein belongs to the LpxC family. Zn(2+) is required as a cofactor.

It catalyses the reaction a UDP-3-O-[(3R)-3-hydroxyacyl]-N-acetyl-alpha-D-glucosamine + H2O = a UDP-3-O-[(3R)-3-hydroxyacyl]-alpha-D-glucosamine + acetate. It participates in glycolipid biosynthesis; lipid IV(A) biosynthesis; lipid IV(A) from (3R)-3-hydroxytetradecanoyl-[acyl-carrier-protein] and UDP-N-acetyl-alpha-D-glucosamine: step 2/6. Functionally, catalyzes the hydrolysis of UDP-3-O-myristoyl-N-acetylglucosamine to form UDP-3-O-myristoylglucosamine and acetate, the committed step in lipid A biosynthesis. The polypeptide is UDP-3-O-acyl-N-acetylglucosamine deacetylase (Psychrobacter cryohalolentis (strain ATCC BAA-1226 / DSM 17306 / VKM B-2378 / K5)).